We begin with the raw amino-acid sequence, 629 residues long: tRNA uridine 5-carboxymethylaminomethyl modification enzyme MnmG (629 aa).

FAD is bound by residues 13–18 (GGGHAG), Val-125, and Ser-180. 273–287 (GPRYCPSIEDKVMRF) is a binding site for NAD(+). Gln-370 contacts FAD.

Belongs to the MnmG family. As to quaternary structure, homodimer. Heterotetramer of two MnmE and two MnmG subunits. Requires FAD as cofactor.

It localises to the cytoplasm. NAD-binding protein involved in the addition of a carboxymethylaminomethyl (cmnm) group at the wobble position (U34) of certain tRNAs, forming tRNA-cmnm(5)s(2)U34. The polypeptide is tRNA uridine 5-carboxymethylaminomethyl modification enzyme MnmG (Klebsiella pneumoniae subsp. pneumoniae (strain ATCC 700721 / MGH 78578)).